The sequence spans 1124 residues: Tyrosine-protein kinase JAK3 (1124 aa).

Residues 1–223 (MAPPSEETPL…RRTVRRALRR (223 aa)) form an interaction with cytokine/interferon/growth hormone receptors region. The residue at position 17 (serine 17) is a Phosphoserine. The region spanning 24-356 (GALHVLLPAR…GYFRLTTDSQ (333 aa)) is the FERM domain. Positions 375-475 (QCHGPITLDF…GVAVTLTSCC (101 aa)) constitute an SH2; atypical domain. Residues 521 to 781 (LEWHENLGHG…AVIRDLNSLI (261 aa)) form the Protein kinase 1 domain. The residue at position 785 (tyrosine 785) is a Phosphotyrosine; by autocatalysis. Positions 822-1111 (LKYISQLGKG…SRGCETHAFT (290 aa)) constitute a Protein kinase 2 domain. ATP is bound by residues 828–836 (LGKGNFGSV) and lysine 855. Phosphotyrosine occurs at positions 904 and 939. The active-site Proton acceptor is aspartate 949. A phosphotyrosine; by autocatalysis mark is found at tyrosine 980 and tyrosine 981.

This sequence belongs to the protein kinase superfamily. Tyr protein kinase family. JAK subfamily. As to quaternary structure, interacts with STAM2 and MYO18A. Interacts with SHB. Interacts with CD69. Post-translationally, tyrosine phosphorylated in response to IL-2 and IL-4. Dephosphorylation of Tyr-980 and Tyr-981 by PTPN2 negatively regulates cytokine-mediated signaling. In terms of tissue distribution, in NK cells and an NK-like cell line but not in resting T-cells or in other tissues. The S-form is more commonly seen in hematopoietic lines, whereas the B-form is detected in cells both of hematopoietic and epithelial origins.

It is found in the endomembrane system. It localises to the cytoplasm. The enzyme catalyses L-tyrosyl-[protein] + ATP = O-phospho-L-tyrosyl-[protein] + ADP + H(+). Non-receptor tyrosine kinase involved in various processes such as cell growth, development, or differentiation. Mediates essential signaling events in both innate and adaptive immunity and plays a crucial role in hematopoiesis during T-cells development. In the cytoplasm, plays a pivotal role in signal transduction via its association with type I receptors sharing the common subunit gamma such as IL2R, IL4R, IL7R, IL9R, IL15R and IL21R. Following ligand binding to cell surface receptors, phosphorylates specific tyrosine residues on the cytoplasmic tails of the receptor, creating docking sites for STATs proteins. Subsequently, phosphorylates the STATs proteins once they are recruited to the receptor. Phosphorylated STATs then form homodimer or heterodimers and translocate to the nucleus to activate gene transcription. For example, upon IL2R activation by IL2, JAK1 and JAK3 molecules bind to IL2R beta (IL2RB) and gamma chain (IL2RG) subunits inducing the tyrosine phosphorylation of both receptor subunits on their cytoplasmic domain. Then, STAT5A and STAT5B are recruited, phosphorylated and activated by JAK1 and JAK3. Once activated, dimerized STAT5 translocates to the nucleus and promotes the transcription of specific target genes in a cytokine-specific fashion. The chain is Tyrosine-protein kinase JAK3 from Homo sapiens (Human).